The sequence spans 176 residues: NAD(P)H-quinone oxidoreductase subunit 6, chloroplastic (176 aa).

5 helical membrane-spanning segments follow: residues 10–30, 33–53, 61–81, 92–112, and 152–172; these read FLLV…VLLP, IFSA…YILA, AQLL…VMFM, LWTV…FSLI, and FFLP…GAIS.

The protein belongs to the complex I subunit 6 family. As to quaternary structure, NDH is composed of at least 16 different subunits, 5 of which are encoded in the nucleus.

The protein resides in the plastid. It is found in the chloroplast thylakoid membrane. It catalyses the reaction a plastoquinone + NADH + (n+1) H(+)(in) = a plastoquinol + NAD(+) + n H(+)(out). The catalysed reaction is a plastoquinone + NADPH + (n+1) H(+)(in) = a plastoquinol + NADP(+) + n H(+)(out). Its function is as follows. NDH shuttles electrons from NAD(P)H:plastoquinone, via FMN and iron-sulfur (Fe-S) centers, to quinones in the photosynthetic chain and possibly in a chloroplast respiratory chain. The immediate electron acceptor for the enzyme in this species is believed to be plastoquinone. Couples the redox reaction to proton translocation, and thus conserves the redox energy in a proton gradient. This chain is NAD(P)H-quinone oxidoreductase subunit 6, chloroplastic (ndhG), found in Arabis hirsuta (Hairy rock-cress).